A 20-amino-acid chain; its full sequence is Disintegrin (20 aa).

Residues 1–20 enclose the Disintegrin domain; sequence EAGEECDCGTPENPCCDAAT. Intrachain disulfides connect cysteine 6-cysteine 15 and cysteine 8-cysteine 16.

The protein belongs to the venom metalloproteinase (M12B) family. P-II subfamily. P-IIa sub-subfamily. As to quaternary structure, monomer. As to expression, expressed by the venom gland.

The protein localises to the secreted. Inhibits fibrinogen interaction with platelets. Acts by binding to alpha-IIb/beta-3 (ITGA2B/ITGB3) on the platelet surface and inhibits aggregation induced by ADP, thrombin, platelet-activating factor and collagen. The protein is Disintegrin of Bothrops fonsecai (Fonseca's lancehead).